Here is a 433-residue protein sequence, read N- to C-terminus: Signal recognition particle 54 kDa protein (433 aa).

GTP-binding positions include 106–113 (GVEGSGKT), 186–190 (DTAGR), and 244–247 (TKMD).

It belongs to the GTP-binding SRP family. SRP54 subfamily. In terms of assembly, part of the signal recognition particle protein translocation system, which is composed of SRP and FtsY. Archaeal SRP consists of a 7S RNA molecule of 300 nucleotides and two protein subunits: SRP54 and SRP19.

Its subcellular location is the cytoplasm. It catalyses the reaction GTP + H2O = GDP + phosphate + H(+). Its function is as follows. Involved in targeting and insertion of nascent membrane proteins into the cytoplasmic membrane. Binds to the hydrophobic signal sequence of the ribosome-nascent chain (RNC) as it emerges from the ribosomes. The SRP-RNC complex is then targeted to the cytoplasmic membrane where it interacts with the SRP receptor FtsY. This is Signal recognition particle 54 kDa protein from Pyrobaculum arsenaticum (strain DSM 13514 / JCM 11321 / PZ6).